The primary structure comprises 377 residues: N-acetyldiaminopimelate deacetylase (377 aa).

Aspartate 69 is an active-site residue. The active-site Proton acceptor is the glutamate 128.

The protein belongs to the peptidase M20A family. N-acetyldiaminopimelate deacetylase subfamily.

The enzyme catalyses N-acetyl-(2S,6S)-2,6-diaminopimelate + H2O = (2S,6S)-2,6-diaminopimelate + acetate. It participates in amino-acid biosynthesis; L-lysine biosynthesis via DAP pathway; LL-2,6-diaminopimelate from (S)-tetrahydrodipicolinate (acetylase route): step 3/3. Catalyzes the conversion of N-acetyl-diaminopimelate to diaminopimelate and acetate. The polypeptide is N-acetyldiaminopimelate deacetylase (Brevibacillus brevis (strain 47 / JCM 6285 / NBRC 100599)).